Here is a 524-residue protein sequence, read N- to C-terminus: MGLHLYDTRRRRVRPFEPLRPGHVGVYVCGPTVQAAPHVGHIRTALPFDLLRRWLVQSGRSVTFVQNVTDIDDKIIINADRDGTSVWELATRQTRAFDDAYRTLGILPPTIQPRATGHIPEMIALVSALVEGGYAYASGGSVWFRVGAFADYGALSHQRPDAMQPSVEAEPGKADPRDFALWKAARPGEPFWSSPWGDGRPGWHLECSAMAGKYLGPVFDIHGGGLDLVFPHHENERAQTVCAATARPASNAASADSPGPGGGEPGGGEPSSGEMARYWMHVGLLTTGGTKMSKSLGNSVLVADALDAVRPQVLRYHLLSAHYRSTLEYSAEALAESTAAHDRVETFVRNALDILGGPGEAAALAADEVVSSVAGAQPTVAGARPVPVPGPGGESRLTPRRAWSDFTIAMDDDLAVGRALAALFGAVSQGNQVLSKAHSRELAGWVDVTRRMLNIFGLDPHEQWPTAGAEFRPALDGAMQVVLDLRSAARARRDYAEADAIRSRLAAAGLIVEDTPEGQRWHLA.

Cys-29 provides a ligand contact to Zn(2+). Residues 31–41 (PTVQAAPHVGH) carry the 'HIGH' region motif. 3 residues coordinate Zn(2+): Cys-207, His-232, and Glu-236. Low complexity predominate over residues 246–258 (ARPASNAASADSP). The segment at 246–273 (ARPASNAASADSPGPGGGEPGGGEPSSG) is disordered. Gly residues predominate over residues 259-270 (GPGGGEPGGGEP). The 'KMSKS' region signature appears at 291-295 (KMSKS). Lys-294 is an ATP binding site.

It belongs to the class-I aminoacyl-tRNA synthetase family. As to quaternary structure, monomer. Requires Zn(2+) as cofactor.

The protein localises to the cytoplasm. The enzyme catalyses tRNA(Cys) + L-cysteine + ATP = L-cysteinyl-tRNA(Cys) + AMP + diphosphate. This is Cysteine--tRNA ligase from Frankia casuarinae (strain DSM 45818 / CECT 9043 / HFP020203 / CcI3).